Here is a 252-residue protein sequence, read N- to C-terminus: Ubiquinone biosynthesis O-methyltransferase (252 aa).

Residues Arg-36, Gly-60, Asp-81, and Leu-123 each coordinate S-adenosyl-L-methionine.

The protein belongs to the methyltransferase superfamily. UbiG/COQ3 family.

It catalyses the reaction a 3-demethylubiquinol + S-adenosyl-L-methionine = a ubiquinol + S-adenosyl-L-homocysteine + H(+). The catalysed reaction is a 3-(all-trans-polyprenyl)benzene-1,2-diol + S-adenosyl-L-methionine = a 2-methoxy-6-(all-trans-polyprenyl)phenol + S-adenosyl-L-homocysteine + H(+). It participates in cofactor biosynthesis; ubiquinone biosynthesis. Functionally, O-methyltransferase that catalyzes the 2 O-methylation steps in the ubiquinone biosynthetic pathway. The sequence is that of Ubiquinone biosynthesis O-methyltransferase from Rickettsia prowazekii (strain Madrid E).